The sequence spans 316 residues: MKRHTRKIAIIGTGLVGSSCAYSIVNQGICEELLLIDINHERAVGEAMDLSHCINFTNTRTKVYAGSYEDCKDMDIVIITAGPAPKPGQSRLDTLGASAKIMESVVGGVMESGFDGIFLLASNPVDIITYQVWKLSGLPRNRVIGTGTSLDSSRLRTILSEMLHVDPRSIHGYSLGEHGDSQMVAWSHVTVGGKPILQILEEQKERFGEIDLDEIVEKTAKAGWEIYKRKGTTYYGIGNSLAYIANSIFNDDHRVIAVSAILDGEYGEYDICTGVPAIITRDGIREIVELNLTEDEESRFAKSNDILRDYMKTIGY.

Positions 16, 37, 42, and 68 each coordinate NAD(+). Residue R91 coordinates substrate. Residues S104, 121–123 (ASN), and T146 each bind NAD(+). 123–126 (NPVD) serves as a coordination point for substrate. Residue 151-154 (DSSR) participates in substrate binding. Beta-D-fructose 1,6-bisphosphate is bound by residues R156 and H171. H178 functions as the Proton acceptor in the catalytic mechanism. Position 233 (T233) interacts with substrate.

It belongs to the LDH/MDH superfamily. LDH family. Homotetramer.

It is found in the cytoplasm. It catalyses the reaction (S)-lactate + NAD(+) = pyruvate + NADH + H(+). The protein operates within fermentation; pyruvate fermentation to lactate; (S)-lactate from pyruvate: step 1/1. Its activity is regulated as follows. Allosterically activated by fructose 1,6-bisphosphate (FBP). Catalyzes the conversion of lactate to pyruvate. This Bacillus thuringiensis subsp. konkukian (strain 97-27) protein is L-lactate dehydrogenase 3.